We begin with the raw amino-acid sequence, 106 residues long: ATP-dependent Clp protease adapter protein ClpS (106 aa).

It belongs to the ClpS family. As to quaternary structure, binds to the N-terminal domain of the chaperone ClpA.

Functionally, involved in the modulation of the specificity of the ClpAP-mediated ATP-dependent protein degradation. The chain is ATP-dependent Clp protease adapter protein ClpS from Enterobacter sp. (strain 638).